We begin with the raw amino-acid sequence, 280 residues long: Bifunctional protein FolD (280 aa).

NADP(+)-binding positions include 165–167, Ser-190, and Ile-231; that span reads GRS.

The protein belongs to the tetrahydrofolate dehydrogenase/cyclohydrolase family. In terms of assembly, homodimer.

The enzyme catalyses (6R)-5,10-methylene-5,6,7,8-tetrahydrofolate + NADP(+) = (6R)-5,10-methenyltetrahydrofolate + NADPH. It carries out the reaction (6R)-5,10-methenyltetrahydrofolate + H2O = (6R)-10-formyltetrahydrofolate + H(+). It participates in one-carbon metabolism; tetrahydrofolate interconversion. Catalyzes the oxidation of 5,10-methylenetetrahydrofolate to 5,10-methenyltetrahydrofolate and then the hydrolysis of 5,10-methenyltetrahydrofolate to 10-formyltetrahydrofolate. This is Bifunctional protein FolD from Moorella thermoacetica (strain ATCC 39073 / JCM 9320).